A 206-amino-acid polypeptide reads, in one-letter code: LexA repressor (206 aa).

A DNA-binding region (H-T-H motif) is located at residues 28-48 (RAEIATRLGFKSANAAEEHLK). Active-site for autocatalytic cleavage activity residues include S123 and K160.

Belongs to the peptidase S24 family. As to quaternary structure, homodimer.

It catalyses the reaction Hydrolysis of Ala-|-Gly bond in repressor LexA.. In terms of biological role, represses a number of genes involved in the response to DNA damage (SOS response), including recA and lexA. In the presence of single-stranded DNA, RecA interacts with LexA causing an autocatalytic cleavage which disrupts the DNA-binding part of LexA, leading to derepression of the SOS regulon and eventually DNA repair. The chain is LexA repressor from Shewanella baltica (strain OS223).